The chain runs to 197 residues: Dephospho-CoA kinase (197 aa).

Positions 4 to 197 (LIGLTGGIAT…VLKWLKTITK (194 aa)) constitute a DPCK domain. 12 to 17 (ATGKST) contributes to the ATP binding site.

The protein belongs to the CoaE family.

It localises to the cytoplasm. It carries out the reaction 3'-dephospho-CoA + ATP = ADP + CoA + H(+). Its pathway is cofactor biosynthesis; coenzyme A biosynthesis; CoA from (R)-pantothenate: step 5/5. Its function is as follows. Catalyzes the phosphorylation of the 3'-hydroxyl group of dephosphocoenzyme A to form coenzyme A. This chain is Dephospho-CoA kinase, found in Lactiplantibacillus plantarum (strain ATCC BAA-793 / NCIMB 8826 / WCFS1) (Lactobacillus plantarum).